Reading from the N-terminus, the 127-residue chain is Major sperm protein 152 (127 aa).

Thr-2 is modified (N-acetylthreonine). The MSP domain occupies 9–126 (DIQTQPGTKI…RRKNLPIEYN (118 aa)).

As to expression, sperm.

It is found in the cell projection. The protein localises to the pseudopodium. The protein resides in the cytoplasm. It localises to the cytoskeleton. Functionally, central component in molecular interactions underlying sperm crawling. Forms an extensive filament system that extends from sperm villipoda, along the leading edge of the pseudopod. In Caenorhabditis elegans, this protein is Major sperm protein 152 (msp-152).